Reading from the N-terminus, the 337-residue chain is Glyceraldehyde-3-phosphate dehydrogenase (337 aa).

Residues 12–13 (RI), Asp34, and Arg79 each bind NAD(+). Residues 150–152 (SCT), Thr181, 210–211 (TG), and Arg233 each bind D-glyceraldehyde 3-phosphate. Catalysis depends on Cys151, which acts as the Nucleophile. Residue Asn315 coordinates NAD(+).

The protein belongs to the glyceraldehyde-3-phosphate dehydrogenase family. As to quaternary structure, homotetramer.

It is found in the cytoplasm. The catalysed reaction is D-glyceraldehyde 3-phosphate + phosphate + NAD(+) = (2R)-3-phospho-glyceroyl phosphate + NADH + H(+). Its pathway is carbohydrate degradation; glycolysis; pyruvate from D-glyceraldehyde 3-phosphate: step 1/5. This is Glyceraldehyde-3-phosphate dehydrogenase (GPD) from Coccidioides posadasii (strain C735) (Valley fever fungus).